A 342-amino-acid chain; its full sequence is Anthranilate phosphoribosyltransferase (342 aa).

Residues Gly-84, 87–88 (GD), Thr-92, 94–97 (NIST), 112–120 (KHGNRGVSS), and Ser-124 contribute to the 5-phospho-alpha-D-ribose 1-diphosphate site. Residue Gly-84 coordinates anthranilate. Residue Ser-96 participates in Mg(2+) binding. Position 115 (Asn-115) interacts with anthranilate. Arg-170 lines the anthranilate pocket. The Mg(2+) site is built by Asp-229 and Glu-230.

This sequence belongs to the anthranilate phosphoribosyltransferase family. Homodimer. The cofactor is Mg(2+).

It catalyses the reaction N-(5-phospho-beta-D-ribosyl)anthranilate + diphosphate = 5-phospho-alpha-D-ribose 1-diphosphate + anthranilate. The protein operates within amino-acid biosynthesis; L-tryptophan biosynthesis; L-tryptophan from chorismate: step 2/5. Functionally, catalyzes the transfer of the phosphoribosyl group of 5-phosphorylribose-1-pyrophosphate (PRPP) to anthranilate to yield N-(5'-phosphoribosyl)-anthranilate (PRA). The protein is Anthranilate phosphoribosyltransferase of Cupriavidus metallidurans (strain ATCC 43123 / DSM 2839 / NBRC 102507 / CH34) (Ralstonia metallidurans).